The sequence spans 441 residues: Diuretic hormone receptor (441 aa).

N-linked (GlcNAc...) asparagine glycans are attached at residues Asn-99, Asn-107, and Asn-112. A helical transmembrane segment spans residues 135 to 158 (FVFFVGFCLSLVAIAVAIWIFLYF). The Cytoplasmic segment spans residues 159-166 (KDLRCLRN). Residues 167 to 187 (TIHTNLMATYICNDATWIISA) form a helical membrane-spanning segment. Residues 188–194 (VVQEYVE) are Extracellular-facing. A helical transmembrane segment spans residues 195 to 224 (NGGLCSVLAVLMHYFYLTNFFWMFVEGLYL). Residues 225–238 (FLLVVATFTGEKVK) are Cytoplasmic-facing. The chain crosses the membrane as a helical span at residues 239–260 (LQIYIIIGWGIPGVIVVTWAII). The Extracellular segment spans residues 261 to 291 (KHLGKTAPDNAGESHPMVLLIKHCPWMAEDY). Residues 292-315 (FDWIHQAPVITVLAVNLVFLFSIM) form a helical membrane-spanning segment. At 316–338 (WVLITKLQSANTAETQQYRKATK) the chain is on the cytoplasmic side. A helical transmembrane segment spans residues 339–357 (ALLVLFPLLGITYILMMQG). The Extracellular segment spans residues 358 to 371 (PMDGVAGHVFRNAQ). A helical transmembrane segment spans residues 372–391 (ALLLSLQGFTVALFYCFLNT). Topologically, residues 392-441 (EVQNTLRHRMSRWRETRTVGGGRRYTLSGHSKDWSPRSRTESIRCLQHRS) are cytoplasmic.

The protein belongs to the G-protein coupled receptor 2 family. In terms of tissue distribution, expressed in Malpighian tubules.

The protein localises to the cell membrane. Functionally, receptor for the insect diurectic hormone. The activity of this receptor is mediated by G proteins which activate adenylyl cyclase. This is Diuretic hormone receptor from Acheta domesticus (House cricket).